We begin with the raw amino-acid sequence, 670 residues long: Oligopeptidase PepF (670 aa).

His-456 is a binding site for Zn(2+). Glu-457 is a catalytic residue. 2 residues coordinate Zn(2+): His-460 and His-463.

The protein belongs to the peptidase M3B family. It depends on Zn(2+) as a cofactor.

The protein localises to the cytoplasm. Functionally, overexpression results in inhibition of sporulation initiation. This sporulation deficiency could be the result of hydrolysis by PepF of the PhrA peptide, a phosphatase regulator. Thus, overexpression of PepF appears to act at the level of the phosphorelay, most likely through modulation of the negative role played by phosphatases. Overexpression of PepF also affects the activity of the competence and sporulation stimulating factor PhrC. The chain is Oligopeptidase PepF from Bacillus subtilis (strain 168).